Consider the following 808-residue polypeptide: Phospholipase D alpha 1 (808 aa).

Residues 1-30 (MAQISLHGTLHVTIYEVDKLHSGGGPHFFR) constitute a propeptide that is removed on maturation. One can recognise a C2 domain in the interval 1 to 125 (MAQISLHGTL…LDGEEIDRWV (125 aa)). Residue Asp186 coordinates Ca(2+). The region spanning 326–364 (TMFTHHQKIVVVDSAMPNGDSQRRRIVSFVGGLDLCDGR) is the PLD phosphodiesterase 1 domain. Residues His331, Lys333, and Asp338 contribute to the active site. His331 contributes to the a 1,2-diacyl-sn-glycero-3-phosphate binding site. Residues His370 and His404 each coordinate Ca(2+). Gln520 and His659 together coordinate a 1,2-diacyl-sn-glycero-3-phosphate. The 28-residue stretch at 654–681 (FMIYVHTKMMIVDDEYIIIGSANINQRS) folds into the PLD phosphodiesterase 2 domain. Residues His659, Lys661, and Asp666 contribute to the active site. Glu720 is a binding site for Ca(2+).

Belongs to the phospholipase D family. C2-PLD subfamily. Ca(2+) is required as a cofactor. As to expression, expression is higher in radicle than in endosperm.

Its subcellular location is the cytoplasm. It is found in the membrane. It localises to the vacuole. The protein resides in the endoplasmic reticulum. The protein localises to the plastid. Its subcellular location is the cell membrane. It catalyses the reaction a 1,2-diacyl-sn-glycero-3-phosphocholine + H2O = a 1,2-diacyl-sn-glycero-3-phosphate + choline + H(+). Its function is as follows. Hydrolyzes glycerol-phospholipids at the terminal phosphodiesteric bond. Plays an important role in various cellular processes, including phytohormone action, vesicular trafficking, secretion, cytoskeletal arrangement, meiosis, tumor promotion, pathogenesis, membrane deterioration and senescence. In Ricinus communis (Castor bean), this protein is Phospholipase D alpha 1 (PLD1).